The following is a 1043-amino-acid chain: Sucrose-phosphate synthase 1 (1043 aa).

Over residues E95–T117 the composition is skewed to basic and acidic residues. Residues E95–G127 are disordered. Phosphoserine occurs at positions 121, 125, 152, and 155. The disordered stretch occupies residues P670 to L693.

It belongs to the glycosyltransferase 1 family. Homodimer or homotetramer. Post-translationally, phosphorylated at Ser-152 upon sucrose supply. Expressed in seeds, stems, rosette leaves, flowers and siliques. Highly expressed in maturing nectaries.

It catalyses the reaction beta-D-fructose 6-phosphate + UDP-alpha-D-glucose = sucrose 6(F)-phosphate + UDP + H(+). The protein operates within glycan biosynthesis; sucrose biosynthesis; sucrose from D-fructose 6-phosphate and UDP-alpha-D-glucose: step 1/2. Its activity is regulated as follows. Activity is regulated by phosphorylation and moderated by concentration of metabolites and light. Its function is as follows. Plays a major role in photosynthetic sucrose synthesis by catalyzing the rate-limiting step of sucrose biosynthesis from UDP-glucose and fructose- 6-phosphate. Involved in the regulation of carbon partitioning in the leaves of plants. May regulate the synthesis of sucrose and therefore play a major role as a limiting factor in the export of photoassimilates out of the leaf. Plays a role for sucrose availability that is essential for plant growth and fiber elongation. Required for nectar secretion. The sequence is that of Sucrose-phosphate synthase 1 (SPS1) from Arabidopsis thaliana (Mouse-ear cress).